The following is a 366-amino-acid chain: Isocitrate dehydrogenase [NAD] subunit alpha, mitochondrial (366 aa).

The transit peptide at 1-27 (MAGSAWVSKVSRLLGAFHNTKQVTRGF) directs the protein to the mitochondrion. Position 77 is an N6-succinyllysine (Lys77). Phosphothreonine is present on Thr101. The substrate site is built by Arg115, Arg125, and Arg146. Lys223 carries the N6-acetyllysine modification. Residues Asp233, Asp257, and Asp261 each contribute to the Mg(2+) site. Residue Lys343 is modified to N6-acetyllysine; alternate. Lys343 is modified (N6-succinyllysine; alternate). N6-succinyllysine is present on Lys350.

It belongs to the isocitrate and isopropylmalate dehydrogenases family. As to quaternary structure, heterooligomer of subunits alpha (IDH3A), beta (IDH3B), and gamma (IDH3G) in the apparent ratio of 2:1:1. The heterodimer containing one IDH3A and one IDH3B subunit and the heterodimer containing one IDH3A and one IDH3G subunit assemble into a heterotetramer (which contains two subunits of IDH3A, one of IDH3B and one of IDH3G) and further into the heterooctamer. The cofactor is Mg(2+). Mn(2+) serves as cofactor. As to expression, expressed in brown adipose tissue (BAT).

The protein localises to the mitochondrion. The catalysed reaction is D-threo-isocitrate + NAD(+) = 2-oxoglutarate + CO2 + NADH. The heterotetramer and the heterodimer composed of IDH3A and IDH3G subunits can be allosterically activated by citrate (CIT) or/and ADP, and the two activators can act independently or synergistically. The heterodimer composed of IDH3A and IDH3B subunits cannot be allosterically regulated and the allosteric regulation of the heterotetramer is through the IDH3G subunit and not the IDH3B subunit. The IDH3G subunit contains the allosteric site which consists of a CIT-binding site and an ADP-binding site, and the binding of CIT and ADP causes conformational changes at the allosteric site which are transmitted to the active site in the catalytic subunit (IDH3A) through a cascade of conformational changes at the heterodimer interface, leading to stabilization of the isocitrate-binding at the active site and thus activation of the enzyme. ATP can activate the heterotetramer and the heterodimer composed of IDH3A and IDH3G subunits at low concentrations but inhibits their activities at high concentrations, whereas ATP exhibits only inhibitory effect on the heterodimer composed of IDH3A and IDH3B subunits. Functionally, catalytic subunit of the enzyme which catalyzes the decarboxylation of isocitrate (ICT) into alpha-ketoglutarate. The heterodimer composed of the alpha (IDH3A) and beta (IDH3B) subunits and the heterodimer composed of the alpha (IDH3A) and gamma (IDH3G) subunits, have considerable basal activity but the full activity of the heterotetramer (containing two subunits of IDH3A, one of IDH3B and one of IDH3G) requires the assembly and cooperative function of both heterodimers. The sequence is that of Isocitrate dehydrogenase [NAD] subunit alpha, mitochondrial from Rattus norvegicus (Rat).